We begin with the raw amino-acid sequence, 88 residues long: MANSKSAKKRALQSEKRRQHNASRRSMLRSYVKKVIAAINTGDHKAATEAFNAAQPIVDRMATKGLIHKNKAARHKARLNAKIKALAA.

A disordered region spans residues 1–27 (MANSKSAKKRALQSEKRRQHNASRRSM).

The protein belongs to the bacterial ribosomal protein bS20 family.

Binds directly to 16S ribosomal RNA. The sequence is that of Small ribosomal subunit protein bS20 from Shewanella loihica (strain ATCC BAA-1088 / PV-4).